Consider the following 2167-residue polypeptide: MRAIRLTVACRYLGPFRSVTLSPVVLPVRLFQTQEITPGEVSLVEATDESDRAFGETRKEDFSFDGSSEFPECFKDTKHVDTFSRARVVSFIKRFSQGAVTSSSEVFEGREIVNDNGTPLYHSRVRLPFRSHTGELWAHGVACNSKDAELLAAMHAEHIIDEFGYHIYTLPSMQRKHAEAARKAGRWAPLPDELERTQSPVRVPLPLRRIVDRDETEGGKWLLIDMRPNHYISPSHTLLSPCLFDTTAVHRIKSFLDEHKLSFAQLCTSVEEPGEGGGQSWYVATVSLPPELSTFSEIKAQGKALNREAAVTLACMHAELVLDAHSICLYPSDSTKQKQHALAAWSYGRPAPLPGEDQKNPSHVVCPLPLKQLAVRREDRISCISYEEDIIRRHRALTDQTCEFIETPTLDSSAVEQLKQFLQRENVPRTDPFLVEEVNGYYKATVVLPLPDLYGIRGGVGIAMNATDARVLAAMHAIDVLNILGFHLMDGSTARAEWIAARRARGESVPADTRDPNVLSPSGRRRVATGNSSTQTPSSSTNARSVAAAPDVGTSDPTAPQNTKRRVAKRARVADAQPTEEKDAANSDSDEATSYLKMRETVSKELWNLEPDSPDGYIMVSPTDPETRTQFEQALYSPRQVDLGSKSRIKNYLASVGRRIEEVFFVQRIEAEDNGGQAICRCAVNLPVPRRFGDRIALGEAVDPKDAENLAAMHAELILDTLGIPIYTDSALQRLHVRLCAKCGRNAPVEYSESVAAATASPPPLRREVVGSIHWENKSKRRRAAISVQKGGGPANSQETTSALREDEEPLIAPKERREYTFVPEKDLDLVSRARVHYYLRRNGIAKLEPEYRMELRGLGNVLHIAELTLPLPDVYGKRVAHGSALTKRDAEILCWMHAEQILDAVGLCLFDNLPMLQRRHVECVKRLGRWAPLVSENATKPPHTPTPLPLTLGTTQEKPQYPTPPTNVRQDWEQYAQECQRYIEINVMREHNIFYEMGKTPRTGDETYDAALAEVESMPIDPDAKTVLQRYCNVANVNYPTFWKSRTVGPISCRVCLTTIEVPGHEYLRASGVAWNKEASQRQAAMHALALLRRVEPDFAEFEKQIKAEVVDKVNLVDPAAVLDEEAPVLRRTARVSKKSLGNWDPVSKDFSHEGKVRIIELFTVCFGLQPPLVRHLNRRSGSFVQHFTVVEVTDEDGKTWVGTGRDAGPRFNEPAAFDDLFSKLSRGVQGFQALMDLIRAHPHLDPEHIANVSLTDSQKERILKAVDGLPMVEEEDVAHPEQWADADSDRGIGIMALIAMDASQRAQESQELEAKLQAKLTNEEYQTRYASQRQRLRIYEKRDEILRAISSNQIVIICGTTGCGKTTQVPQYILDDMTEKGMGGDCSIVITQPRRLSAVSIARRVAAERLESIGETCGYSIRLDAKPGRNINFCTSGVLLRLLHSAPLLNGINYLIIDEIHERDINSDFLLILLRQLLHRRKDLHVILMSATLQADQFGKYFGNAPIINVEGYVHAVEEMYLEDLVPIATERNVMTPLLKEAAAALERNGAADGFCPTVVPPTAKYGFLEATADIDYMTIQIAIDHAVRSLDLTDSSILVFLPGWDEINRAKEILERNAKFHIICLHSSVGAEEQMRCFLPAPEGKIKLILSTNIAESGVTIDDVAAVIDVGRGKEKSYVMRKGTTSVGRNEMGSMSQLVTVYASRANCVQRRGRVGRTRPGMCIRLYSKKHFQSLHDFQTPEMLRTHLDSLCLQILALDLGDPADFLQQALEPPSSDHIEAAMKRLHELGATTSTRQLTPLGLRLSRLPVAPKVGKMVIMGAILRCLDSALTIAGVSDTDVFISTREHREAVRLHKEDLSYGTQSDVIASVNAFNFWVTSHYAKTPAEVVYDLQERMLSVPQLLTVSKYKQQFFEIVAGSGFIHMKQNYKDAKNKDRADIFVDQSEYSADSLNVGLVKCVVASGLFPNVVMNRGKRLMRNKLANRLDPSSASVVHRTSQENIGQPYFVYDELVKSSESERLLVRDLTNVSLWTILLMGTSSMPVTYRDDLNLAVVDEWIMFRATFGTLELIRKFKRALNVCLGRKFMNPNDEENNAKLEELRCIIKELVCTPFKPNDLAEKPWEEKGVIIEPCTEPKGGSSEAEKTHVNSSHTPTTSAEAGGDS.

A mitochondrion-targeting transit peptide spans 1–30 (MRAIRLTVACRYLGPFRSVTLSPVVLPVRL). 2 disordered regions span residues 503 to 593 (RARG…DEAT) and 937 to 969 (ENAT…PTNV). The span at 532-541 (SSTQTPSSST) shows a compositional bias: low complexity. The region spanning 1024-1095 (DAKTVLQRYC…AMHALALLRR (72 aa)) is the DRBM domain. In terms of domain architecture, Helicase ATP-binding spans 1348–1513 (LRAISSNQIV…FGNAPIINVE (166 aa)). An ATP-binding site is contributed by 1361–1368 (GTTGCGKT). An Important for binding to gRNA motif is present at residues 1366-1367 (GK). The short motif at 1460–1463 (DEIH) is the DEAH box element. The Helicase C-terminal domain occupies 1585–1762 (AIDHAVRSLD…SLCLQILALD (178 aa)). The tract at residues 2132–2167 (IIEPCTEPKGGSSEAEKTHVNSSHTPTTSAEAGGDS) is disordered. Over residues 2151 to 2161 (VNSSHTPTTSA) the composition is skewed to polar residues.

The protein belongs to the DEAD box helicase family. DEAH subfamily. As to quaternary structure, component of the REH2-associated complex (REH2C) composed of helicase REH2, associated factors H2F1 and H2F2, and mRNAs at various editing stages; the formation of the complex is RNA-independent. Within the complex, interacts with H2F1; the interaction is direct. Interacts transiently, in a RNA-dependent manner, with various editing complexes including the RNA editing core (RECC) complex, the gRNA-binding (GRBC) complex (also known as the MRB1 complex) and the RNA editing mediator (REMC) complex. Interacts with GAP1/GRBC2 via RNA forming a variant of the GRBC complex known as REH2-GRBC complex. Interacts with mitochondrial ribosomes.

It localises to the mitochondrion. It carries out the reaction ATP + H2O = ADP + phosphate + H(+). ATP-dependent RNA helicase that unwinds RNA in a 3' to 5' direction and that plays an important role in mitochondrial mRNA editing, a process involving the addition and deletion of uridine (U) nucleotides in the pre-mRNA. As part of the RET2-containing gRNA-binding (RET2-GRBC) complex, acts as a scaffold for the assembly of mRNA-gRNA hybrids and the recruitment of the RNA editing core (RECC) complex. Regulates several steps of mRNA editing by the MRBC3010/GRBC6 containing gRNA-binding (MRBC3010-GRBC) complex including loading of unedited mRNA, editing in the first sequence block and subsequent editing progression across multiple sequence blocks. Also, regulates the RNA substrate content of the MRBC3010-GRBC complex as well as the association of this complex with mitoribosomes. The polypeptide is RNA editing associated helicase 2 (Trypanosoma brucei brucei (strain 927/4 GUTat10.1)).